We begin with the raw amino-acid sequence, 155 residues long: Urease accessory protein UreE (155 aa).

This sequence belongs to the UreE family.

It is found in the cytoplasm. In terms of biological role, involved in urease metallocenter assembly. Binds nickel. Probably functions as a nickel donor during metallocenter assembly. The chain is Urease accessory protein UreE from Synechococcus sp. (strain CC9311).